The chain runs to 146 residues: 3-dehydroquinate dehydratase (146 aa).

Catalysis depends on Y24, which acts as the Proton acceptor. 3 residues coordinate substrate: N73, H79, and D86. H99 serves as the catalytic Proton donor. Residues 100–101 and R110 contribute to the substrate site; that span reads LS.

It belongs to the type-II 3-dehydroquinase family. As to quaternary structure, homododecamer.

It carries out the reaction 3-dehydroquinate = 3-dehydroshikimate + H2O. It participates in metabolic intermediate biosynthesis; chorismate biosynthesis; chorismate from D-erythrose 4-phosphate and phosphoenolpyruvate: step 3/7. Functionally, catalyzes a trans-dehydration via an enolate intermediate. This is 3-dehydroquinate dehydratase from Shewanella baltica (strain OS195).